We begin with the raw amino-acid sequence, 146 residues long: Small ribosomal subunit protein uS13A (146 aa).

At serine 2 the chain carries N-acetylserine. A Glycyl lysine isopeptide (Lys-Gly) (interchain with G-Cter in ubiquitin) cross-link involves residue lysine 36. An N6-methyllysine; by RKM1 modification is found at lysine 48. Residues lysine 49, lysine 80, and lysine 96 each participate in a glycyl lysine isopeptide (Lys-Gly) (interchain with G-Cter in ubiquitin) cross-link.

It belongs to the universal ribosomal protein uS13 family. In terms of assembly, component of the small ribosomal subunit (SSU). Mature yeast ribosomes consist of a small (40S) and a large (60S) subunit. The 40S small subunit contains 1 molecule of ribosomal RNA (18S rRNA) and 33 different proteins (encoded by 57 genes). The large 60S subunit contains 3 rRNA molecules (25S, 5.8S and 5S rRNA) and 46 different proteins (encoded by 81 genes). In terms of processing, N-terminally acetylated by acetyltransferase NatA.

It localises to the cytoplasm. Its function is as follows. Component of the ribosome, a large ribonucleoprotein complex responsible for the synthesis of proteins in the cell. The small ribosomal subunit (SSU) binds messenger RNAs (mRNAs) and translates the encoded message by selecting cognate aminoacyl-transfer RNA (tRNA) molecules. The large subunit (LSU) contains the ribosomal catalytic site termed the peptidyl transferase center (PTC), which catalyzes the formation of peptide bonds, thereby polymerizing the amino acids delivered by tRNAs into a polypeptide chain. The nascent polypeptides leave the ribosome through a tunnel in the LSU and interact with protein factors that function in enzymatic processing, targeting, and the membrane insertion of nascent chains at the exit of the ribosomal tunnel. The protein is Small ribosomal subunit protein uS13A of Saccharomyces cerevisiae (strain ATCC 204508 / S288c) (Baker's yeast).